The following is an 80-amino-acid chain: MNLKVLAVFVLCAILVVVTAERRGTETGVYKKDTLQDLIKRTRNCIDRFPTGTCKQVKKGGSCKNSDKYRMNCRKTCGLC.

The N-terminal stretch at 1–20 is a signal peptide; it reads MNLKVLAVFVLCAILVVVTA. Positions 21–39 are excised as a propeptide; sequence ERRGTETGVYKKDTLQDLI. Residues 45 to 80 form the ShKT domain; that stretch reads CIDRFPTGTCKQVKKGGSCKNSDKYRMNCRKTCGLC. Intrachain disulfides connect cysteine 45-cysteine 80, cysteine 54-cysteine 73, and cysteine 63-cysteine 77. The tract at residues 68–69 is crucial for binding to potassium channels; sequence KY.

Belongs to the sea anemone type 1 potassium channel toxin family. Type 1b subfamily.

It localises to the secreted. The protein resides in the nematocyst. In terms of biological role, inhibits voltage-gated potassium channels (Kv1/KCNA). The polypeptide is U-actitoxin-Avd9a (Anemonia viridis (Snakelocks anemone)).